We begin with the raw amino-acid sequence, 221 residues long: Small ribosomal subunit protein uS3c (221 aa).

Residues 39-109 (LRDYLKTRLA…RVIVHVVEIA (71 aa)) form the KH type-2 domain.

This sequence belongs to the universal ribosomal protein uS3 family. In terms of assembly, part of the 30S ribosomal subunit.

It localises to the plastid. It is found in the chloroplast. This is Small ribosomal subunit protein uS3c (rps3) from Nephroselmis olivacea (Green alga).